The primary structure comprises 494 residues: ATP synthase subunit beta, plastid (494 aa).

169–176 (GGAGVGKT) lines the ATP pocket.

It belongs to the ATPase alpha/beta chains family. In terms of assembly, F-type ATPases have 2 components, CF(1) - the catalytic core - and CF(0) - the membrane proton channel. CF(1) has five subunits: alpha(3), beta(3), gamma(1), delta(1), epsilon(1). CF(0) has four main subunits: a(1), b(1), b'(1) and c(9-12).

Its subcellular location is the plastid membrane. The enzyme catalyses ATP + H2O + 4 H(+)(in) = ADP + phosphate + 5 H(+)(out). In terms of biological role, produces ATP from ADP in the presence of a proton gradient across the membrane. The catalytic sites are hosted primarily by the beta subunits. This chain is ATP synthase subunit beta, plastid (atpB), found in Cuscuta sandwichiana (Kauna'oa).